The following is a 148-amino-acid chain: C-C motif chemokine 2 (148 aa).

Residues 1–23 form the signal peptide; it reads MQVPVMLLGLLFTVAGWSIHVLA. Q24 carries the post-translational modification Pyrrolidone carboxylic acid. 2 disulfides stabilise this stretch: C34–C59 and C35–C75. A glycan (N-linked (GlcNAc...) asparagine) is linked at N126.

The protein belongs to the intercrine beta (chemokine CC) family. In terms of assembly, monomer or homodimer; in equilibrium. Is tethered on endothelial cells by glycosaminoglycan (GAG) side chains of proteoglycans. Interacts with TNFAIP6 (via Link domain). Processing at the N-terminus can regulate receptor and target cell selectivity. Deletion of the N-terminal residue converts it from an activator of basophil to an eosinophil chemoattractant. In terms of processing, N-Glycosylated.

It is found in the secreted. Functionally, acts as a ligand for C-C chemokine receptor CCR2. Signals through binding and activation of CCR2 and induces a strong chemotactic response and mobilization of intracellular calcium ions. Exhibits a chemotactic activity for monocytes and basophils but not neutrophils or eosinophils. Plays an important role in mediating peripheral nerve injury-induced neuropathic pain. Increases NMDA-mediated synaptic transmission in both dopamine D1 and D2 receptor-containing neurons, which may be caused by MAPK/ERK-dependent phosphorylation of GRIN2B/NMDAR2B. The sequence is that of C-C motif chemokine 2 (Ccl2) from Mus musculus (Mouse).